We begin with the raw amino-acid sequence, 1059 residues long: MPKRQDISKILVIGSGPIVIGQAAEFDYSGTQAALSLKEEGYHVILVNSNPATIMTDAEIADKVYIEPLSIDFIERILRKERPDAILPTLGGQTGLNMAKDLSEAGILDELNIELLGTKLSAIEEAEDREEFKALMERLNEPIPESIIATTLEESLNFADTHGYPVIVRPAYTLGGTGGGIAQTHEELSEITANGLELSPVTQVLIERSIAGYKEIEFEVMRDANDNALVVASMENFDPVGIHTGDSIVTAPVQTLSDREVQMMRDAALKIIRALKIEGGVNIQMALDPDSYKYYIIEVNPRVSRSSALASKATGYPIAKMAAKIAVGLTLDEIINPVTGTTKAEFEPALDYVVFKIPRWPFDKFSTADRRLGTQMKATGEVMAIGRNMEEAMLKAVRSLEIGAIGLDDITYKDLSDDELLAALMPARDDRLFMIADLLRRGVSIETIHDKTLINEFFLDKVLHVIEIEQDLASHVGDIDQLQYAKKNGFADETIAKIWGKTAADIRTLRKDKKIKPVYKMVDTVAAEFESATPYYYATYEQENESIISTKKSVLVLGSGPIRIGQGVEFDYATVHAVKAIQRAGYEAIIMNSNPETVSTDFSISDKLYFEPLTLEDVLNVIDLENPVGVVVQFGGQTAINLAQPLLDNGVNILGTSVEDLNRAEDREAFDQVIKELALPQPVGKTATTVDCALAAAQSIGYPVLIRPSYVLGGRAMEIVSSDDELQDYMQRAVKVSNDHPVLIDSYLVGQEAEVDVLSDGETAVIPGIMEHIERAGVHSGDSMSVYPPQYLSQKVQDEMVQASINLAKAMNTIGLMNVQFVIHENTAYVIEVNPRASRTVPFISKVTHLPLAQLATRVMLGEKLSEMGFETGLVPNDDMVHVKAPIFSFTKLPDVDSLLGPEMKSTGEVMGSDINLSKALYKAFIASNIKVPRYGNVLFTVADDDKEEALELAKRFNDLGFALFATAGTGAYLSDNDLPVEVLDKISESDNNAVAALRQQKVQVVINTTQADDRAESDGRLIRNAAIENAVPLFTALDTVSAFLEVLESRSFTVKEMH.

Residues 1–401 are carboxyphosphate synthetic domain; sequence MPKRQDISKI…AMLKAVRSLE (401 aa). The ATP site is built by Arg129, Arg169, Gly175, Gly176, Arg208, Ile210, Glu215, Gly241, Ile242, His243, Gln284, and Glu298. In terms of domain architecture, ATP-grasp 1 spans 133–327; it reads KALMERLNEP…IAKMAAKIAV (195 aa). 3 residues coordinate Mg(2+): Gln284, Glu298, and Asn300. Mn(2+) is bound by residues Gln284, Glu298, and Asn300. Residues 402 to 546 are oligomerization domain; the sequence is IGAIGLDDIT…YATYEQENES (145 aa). The tract at residues 547–929 is carbamoyl phosphate synthetic domain; that stretch reads IISTKKSVLV…ALYKAFIASN (383 aa). One can recognise an ATP-grasp 2 domain in the interval 671–861; that stretch reads DQVIKELALP…LAQLATRVML (191 aa). Residues Arg707, Ser746, Leu748, Glu752, Gly777, Val778, His779, Ser780, Gln820, and Glu832 each contribute to the ATP site. Mg(2+) contacts are provided by Gln820, Glu832, and Asn834. Positions 820, 832, and 834 each coordinate Mn(2+). Residues 930–1059 form the MGS-like domain; that stretch reads IKVPRYGNVL…SRSFTVKEMH (130 aa). Positions 930-1059 are allosteric domain; that stretch reads IKVPRYGNVL…SRSFTVKEMH (130 aa).

Belongs to the CarB family. In terms of assembly, composed of two chains; the small (or glutamine) chain promotes the hydrolysis of glutamine to ammonia, which is used by the large (or ammonia) chain to synthesize carbamoyl phosphate. Tetramer of heterodimers (alpha,beta)4. It depends on Mg(2+) as a cofactor. The cofactor is Mn(2+).

It catalyses the reaction hydrogencarbonate + L-glutamine + 2 ATP + H2O = carbamoyl phosphate + L-glutamate + 2 ADP + phosphate + 2 H(+). The enzyme catalyses hydrogencarbonate + NH4(+) + 2 ATP = carbamoyl phosphate + 2 ADP + phosphate + 2 H(+). It functions in the pathway amino-acid biosynthesis; L-arginine biosynthesis; carbamoyl phosphate from bicarbonate: step 1/1. Its pathway is pyrimidine metabolism; UMP biosynthesis via de novo pathway; (S)-dihydroorotate from bicarbonate: step 1/3. Its function is as follows. Large subunit of the glutamine-dependent carbamoyl phosphate synthetase (CPSase). CPSase catalyzes the formation of carbamoyl phosphate from the ammonia moiety of glutamine, carbonate, and phosphate donated by ATP, constituting the first step of 2 biosynthetic pathways, one leading to arginine and/or urea and the other to pyrimidine nucleotides. The large subunit (synthetase) binds the substrates ammonia (free or transferred from glutamine from the small subunit), hydrogencarbonate and ATP and carries out an ATP-coupled ligase reaction, activating hydrogencarbonate by forming carboxy phosphate which reacts with ammonia to form carbamoyl phosphate. The protein is Carbamoyl phosphate synthase large chain of Leuconostoc mesenteroides subsp. mesenteroides (strain ATCC 8293 / DSM 20343 / BCRC 11652 / CCM 1803 / JCM 6124 / NCDO 523 / NBRC 100496 / NCIMB 8023 / NCTC 12954 / NRRL B-1118 / 37Y).